Here is a 273-residue protein sequence, read N- to C-terminus: Formamidopyrimidine-DNA glycosylase (273 aa).

Catalysis depends on proline 2, which acts as the Schiff-base intermediate with DNA. The Proton donor role is filled by glutamate 3. Lysine 59 acts as the Proton donor; for beta-elimination activity in catalysis. Residues histidine 92 and arginine 111 each coordinate DNA. Residues 239–273 form an FPG-type zinc finger; that stretch reads KVYGKTGEPCVICGTPIEKIKLNGRGTHFCPHCQK. Catalysis depends on arginine 263, which acts as the Proton donor; for delta-elimination activity.

Belongs to the FPG family. Monomer. Zn(2+) is required as a cofactor.

It catalyses the reaction Hydrolysis of DNA containing ring-opened 7-methylguanine residues, releasing 2,6-diamino-4-hydroxy-5-(N-methyl)formamidopyrimidine.. It carries out the reaction 2'-deoxyribonucleotide-(2'-deoxyribose 5'-phosphate)-2'-deoxyribonucleotide-DNA = a 3'-end 2'-deoxyribonucleotide-(2,3-dehydro-2,3-deoxyribose 5'-phosphate)-DNA + a 5'-end 5'-phospho-2'-deoxyribonucleoside-DNA + H(+). Its function is as follows. Involved in base excision repair of DNA damaged by oxidation or by mutagenic agents. Acts as a DNA glycosylase that recognizes and removes damaged bases. Has a preference for oxidized purines, such as 7,8-dihydro-8-oxoguanine (8-oxoG). Has AP (apurinic/apyrimidinic) lyase activity and introduces nicks in the DNA strand. Cleaves the DNA backbone by beta-delta elimination to generate a single-strand break at the site of the removed base with both 3'- and 5'-phosphates. The sequence is that of Formamidopyrimidine-DNA glycosylase from Listeria innocua serovar 6a (strain ATCC BAA-680 / CLIP 11262).